The sequence spans 298 residues: ATP synthase gamma chain (298 aa).

The protein belongs to the ATPase gamma chain family. As to quaternary structure, F-type ATPases have 2 components, CF(1) - the catalytic core - and CF(0) - the membrane proton channel. CF(1) has five subunits: alpha(3), beta(3), gamma(1), delta(1), epsilon(1). CF(0) has three main subunits: a, b and c.

It localises to the cell inner membrane. Its function is as follows. Produces ATP from ADP in the presence of a proton gradient across the membrane. The gamma chain is believed to be important in regulating ATPase activity and the flow of protons through the CF(0) complex. This Desulfosudis oleivorans (strain DSM 6200 / JCM 39069 / Hxd3) (Desulfococcus oleovorans) protein is ATP synthase gamma chain.